The primary structure comprises 404 residues: Propionate kinase (404 aa).

Belongs to the acetokinase family. PduW subfamily.

It localises to the cytoplasm. It catalyses the reaction propanoate + ATP = propanoyl phosphate + ADP. It participates in polyol metabolism; 1,2-propanediol degradation. Functionally, works with phosphate acetyltransferase (pta) to capture exogenous propionate and regenerate propionyl-CoA during degradation of 1,2-propanediol (1,2-PD). The chain is Propionate kinase from Citrobacter koseri (strain ATCC BAA-895 / CDC 4225-83 / SGSC4696).